A 482-amino-acid polypeptide reads, in one-letter code: tRNA sulfurtransferase (482 aa).

Residues 61 to 165 enclose the THUMP domain; that stretch reads LAIRDALTRI…DDRLLLIKGR (105 aa). ATP is bound by residues 183-184, Lys265, Gly287, and Gln296; that span reads LI. Cysteines 344 and 456 form a disulfide. Positions 404–482 constitute a Rhodanese domain; it reads FGPNDVILDI…GFANVKVYRP (79 aa). Catalysis depends on Cys456, which acts as the Cysteine persulfide intermediate.

Belongs to the ThiI family.

Its subcellular location is the cytoplasm. It catalyses the reaction [ThiI sulfur-carrier protein]-S-sulfanyl-L-cysteine + a uridine in tRNA + 2 reduced [2Fe-2S]-[ferredoxin] + ATP + H(+) = [ThiI sulfur-carrier protein]-L-cysteine + a 4-thiouridine in tRNA + 2 oxidized [2Fe-2S]-[ferredoxin] + AMP + diphosphate. The enzyme catalyses [ThiS sulfur-carrier protein]-C-terminal Gly-Gly-AMP + S-sulfanyl-L-cysteinyl-[cysteine desulfurase] + AH2 = [ThiS sulfur-carrier protein]-C-terminal-Gly-aminoethanethioate + L-cysteinyl-[cysteine desulfurase] + A + AMP + 2 H(+). The protein operates within cofactor biosynthesis; thiamine diphosphate biosynthesis. Its function is as follows. Catalyzes the ATP-dependent transfer of a sulfur to tRNA to produce 4-thiouridine in position 8 of tRNAs, which functions as a near-UV photosensor. Also catalyzes the transfer of sulfur to the sulfur carrier protein ThiS, forming ThiS-thiocarboxylate. This is a step in the synthesis of thiazole, in the thiamine biosynthesis pathway. The sulfur is donated as persulfide by IscS. The polypeptide is tRNA sulfurtransferase (Salmonella choleraesuis (strain SC-B67)).